Consider the following 725-residue polypeptide: Phosphoribosylformylglycinamidine synthase subunit PurL (725 aa).

Residue H34 is part of the active site. Position 37 (Y37) interacts with ATP. E93 provides a ligand contact to Mg(2+). Residues 94 to 97 (SHNH) and R116 contribute to the substrate site. Residue H95 is the Proton acceptor of the active site. Residue D117 coordinates Mg(2+). The segment at 220 to 241 (GASFASEDLSEDAETEDRPAVQ) is disordered. Substrate is bound at residue Q241. D269 contacts Mg(2+). 313–315 (ESQ) is a substrate binding site. ATP contacts are provided by D489 and G526. N527 lines the Mg(2+) pocket. Position 529 (S529) interacts with substrate.

The protein belongs to the FGAMS family. Monomer. Part of the FGAM synthase complex composed of 1 PurL, 1 PurQ and 2 PurS subunits.

The protein resides in the cytoplasm. The enzyme catalyses N(2)-formyl-N(1)-(5-phospho-beta-D-ribosyl)glycinamide + L-glutamine + ATP + H2O = 2-formamido-N(1)-(5-O-phospho-beta-D-ribosyl)acetamidine + L-glutamate + ADP + phosphate + H(+). The protein operates within purine metabolism; IMP biosynthesis via de novo pathway; 5-amino-1-(5-phospho-D-ribosyl)imidazole from N(2)-formyl-N(1)-(5-phospho-D-ribosyl)glycinamide: step 1/2. Functionally, part of the phosphoribosylformylglycinamidine synthase complex involved in the purines biosynthetic pathway. Catalyzes the ATP-dependent conversion of formylglycinamide ribonucleotide (FGAR) and glutamine to yield formylglycinamidine ribonucleotide (FGAM) and glutamate. The FGAM synthase complex is composed of three subunits. PurQ produces an ammonia molecule by converting glutamine to glutamate. PurL transfers the ammonia molecule to FGAR to form FGAM in an ATP-dependent manner. PurS interacts with PurQ and PurL and is thought to assist in the transfer of the ammonia molecule from PurQ to PurL. The polypeptide is Phosphoribosylformylglycinamidine synthase subunit PurL (Haloquadratum walsbyi (strain DSM 16790 / HBSQ001)).